Consider the following 213-residue polypeptide: C-type lectin domain family 4 member C (213 aa).

Over Met1 to Val21 the chain is Cytoplasmic. Residues Trp22 to His44 form a helical; Signal-anchor for type II membrane protein membrane-spanning segment. The Extracellular segment spans residues Asn45–Ile213. Disulfide bonds link Cys70–Cys82 and Cys83–Cys94. The 118-residue stretch at Phe90–Lys207 folds into the C-type lectin domain. Asn110 and Asn137 each carry an N-linked (GlcNAc...) asparagine glycan. Disulfide bonds link Cys111-Cys206 and Cys180-Cys198. Ser139 serves as a coordination point for a carbohydrate. The N-linked (GlcNAc...) asparagine glycan is linked to Asn164. Ca(2+) contacts are provided by Glu172, Asn174, and Glu178. Residues Glu178, Asn184 to Arg186, Asn194, Asn194 to Asp195, and Gln202 each bind a carbohydrate. Asn194 and Asp195 together coordinate Ca(2+).

As to quaternary structure, homodimer. As to expression, expressed in plasmacytoid dendritic cells (PDCs). Constitutively expressed in immature monocyte-derived dendritic cells (iMDDC) and is significantly down-regulated upon maturation with LPS but not with TNF-alpha.

Its subcellular location is the cell membrane. Lectin-type cell surface receptor which may play a role in antigen capturing by dendritic cells. Specifically recognizes non-sialylated galactose-terminated biantennary glycans containing the trisaccharide epitope Gal(beta1-3/4)GlcNAc(beta1-2)Man. Binds to serum IgG. Efficiently targets ligand into antigen-processing and peptide-loading compartments for presentation to T-cells. May mediate potent inhibition of induction of IFN-alpha/beta expression in plasmacytoid dendritic cells. May act as a signaling receptor that activates protein-tyrosine kinases and mobilizes intracellular calcium. The protein is C-type lectin domain family 4 member C (CLEC4C) of Homo sapiens (Human).